Consider the following 147-residue polypeptide: Ribosomal RNA large subunit methyltransferase H (147 aa).

S-adenosyl-L-methionine is bound by residues Leu-64, Gly-95, and 114–119; that span reads LSSLTL.

The protein belongs to the RNA methyltransferase RlmH family. As to quaternary structure, homodimer.

The protein resides in the cytoplasm. The catalysed reaction is pseudouridine(1915) in 23S rRNA + S-adenosyl-L-methionine = N(3)-methylpseudouridine(1915) in 23S rRNA + S-adenosyl-L-homocysteine + H(+). Specifically methylates the pseudouridine at position 1915 (m3Psi1915) in 23S rRNA. The sequence is that of Ribosomal RNA large subunit methyltransferase H from Polynucleobacter asymbioticus (strain DSM 18221 / CIP 109841 / QLW-P1DMWA-1) (Polynucleobacter necessarius subsp. asymbioticus).